The sequence spans 492 residues: Probable protein phosphatase 2C 33 (492 aa).

The interval 1–46 (MGSCLSAESRSPRPGSPCSPAFSVRKRKNSKKRPGSRNSSFDYRRE) is disordered. Basic residues predominate over residues 24-35 (VRKRKNSKKRPG). Residues 64-393 (VACIYTQQGK…DDCAAVCLYL (330 aa)) enclose the PPM-type phosphatase domain. The Mn(2+) site is built by aspartate 100, glycine 101, aspartate 338, and aspartate 384. Residues 406–468 (SISKLEDGEE…ADNLDSEPGT (63 aa)) form a disordered region. Residues 412-427 (DGEEEELKATTEDDDA) show a composition bias toward acidic residues. Residues 441 to 460 (SGKEIALDESETEKLIKEAD) are compositionally biased toward basic and acidic residues.

Belongs to the PP2C family. The cofactor is Mg(2+). It depends on Mn(2+) as a cofactor.

The enzyme catalyses O-phospho-L-seryl-[protein] + H2O = L-seryl-[protein] + phosphate. It carries out the reaction O-phospho-L-threonyl-[protein] + H2O = L-threonyl-[protein] + phosphate. In Arabidopsis thaliana (Mouse-ear cress), this protein is Probable protein phosphatase 2C 33 (PPC6-1).